Consider the following 395-residue polypeptide: Phosphopentomutase (395 aa).

Mn(2+) is bound by residues D13, D288, H293, D329, H330, and H341.

Belongs to the phosphopentomutase family. It depends on Mn(2+) as a cofactor.

It localises to the cytoplasm. The enzyme catalyses 2-deoxy-alpha-D-ribose 1-phosphate = 2-deoxy-D-ribose 5-phosphate. It carries out the reaction alpha-D-ribose 1-phosphate = D-ribose 5-phosphate. Its pathway is carbohydrate degradation; 2-deoxy-D-ribose 1-phosphate degradation; D-glyceraldehyde 3-phosphate and acetaldehyde from 2-deoxy-alpha-D-ribose 1-phosphate: step 1/2. Its function is as follows. Isomerase that catalyzes the conversion of deoxy-ribose 1-phosphate (dRib-1-P) and ribose 1-phosphate (Rib-1-P) to deoxy-ribose 5-phosphate (dRib-5-P) and ribose 5-phosphate (Rib-5-P), respectively. The sequence is that of Phosphopentomutase from Agathobacter rectalis (strain ATCC 33656 / DSM 3377 / JCM 17463 / KCTC 5835 / VPI 0990) (Eubacterium rectale).